The sequence spans 280 residues: Succinate dehydrogenase [ubiquinone] iron-sulfur subunit, mitochondrial (280 aa).

The N-terminal 25 residues, 1-25 (MAAVCFSLSRCCSAVHRPAVTAVRF), are a transit peptide targeting the mitochondrion. Positions 39–129 (KKFQIYRWDP…TSKVTKIYPL (91 aa)) constitute a 2Fe-2S ferredoxin-type domain. 4 residues coordinate [2Fe-2S] cluster: C92, C97, C100, and C112. A 4Fe-4S ferredoxin-type domain is found at 175 to 205 (DRQKLDGLYECILCACCSTSCPSYWWNADKY). The [4Fe-4S] cluster site is built by C185, C188, and C191. A [3Fe-4S] cluster-binding site is contributed by C195. W200 contributes to the a ubiquinone binding site. C242 and C248 together coordinate [3Fe-4S] cluster. Position 252 (C252) interacts with [4Fe-4S] cluster.

This sequence belongs to the succinate dehydrogenase/fumarate reductase iron-sulfur protein family. As to quaternary structure, component of complex II composed of four subunits: the flavoprotein (FP) sdha, iron-sulfur protein (IP) sdhb, and a cytochrome b composed of sdhc and sdhd. [2Fe-2S] cluster is required as a cofactor. [3Fe-4S] cluster serves as cofactor. It depends on [4Fe-4S] cluster as a cofactor.

The protein localises to the mitochondrion inner membrane. The enzyme catalyses a quinone + succinate = fumarate + a quinol. It catalyses the reaction (R)-malate + a quinone = enol-oxaloacetate + a quinol. The catalysed reaction is (S)-malate + a quinone = enol-oxaloacetate + a quinol. It functions in the pathway carbohydrate metabolism; tricarboxylic acid cycle; fumarate from succinate (eukaryal route): step 1/1. Enol-oxaloacetate inhibits the succinate dehydrogenase activity. In terms of biological role, iron-sulfur protein (IP) subunit of the succinate dehydrogenase complex (mitochondrial respiratory chain complex II), responsible for transferring electrons from succinate to ubiquinone (coenzyme Q). SDH also oxidizes malate to the non-canonical enol form of oxaloacetate, enol-oxaloacetate. Enol-oxaloacetate, which is a potent inhibitor of the succinate dehydrogenase activity, is further isomerized into keto-oxaloacetate. This Danio rerio (Zebrafish) protein is Succinate dehydrogenase [ubiquinone] iron-sulfur subunit, mitochondrial (sdhb).